A 234-amino-acid polypeptide reads, in one-letter code: Sugar fermentation stimulation protein A (234 aa).

A DNA-binding region (H-T-H motif) is located at residues 201 to 220 (LLSEAQNKGVEVLAYKAELS).

Belongs to the SfsA family.

In terms of biological role, binds to DNA non-specifically. Could be a regulatory factor involved in maltose metabolism. This chain is Sugar fermentation stimulation protein A, found in Salmonella gallinarum (strain 287/91 / NCTC 13346).